We begin with the raw amino-acid sequence, 535 residues long: uncharacterized protein (535 aa).

The tract at residues 1–34 is disordered; it reads MKAIDNQIRNISSSHQDKHSDKVNSHQHHGKVDK. The segment covering 15-34 has biased composition (basic and acidic residues); the sequence is HQDKHSDKVNSHQHHGKVDK.

This is an uncharacterized protein from Escherichia coli (strain K12).